A 277-amino-acid polypeptide reads, in one-letter code: Orotidine 5'-phosphate decarboxylase (277 aa).

Lys93 serves as the catalytic Proton donor.

The protein belongs to the OMP decarboxylase family. Type 2 subfamily.

The catalysed reaction is orotidine 5'-phosphate + H(+) = UMP + CO2. It functions in the pathway pyrimidine metabolism; UMP biosynthesis via de novo pathway; UMP from orotate: step 2/2. This is Orotidine 5'-phosphate decarboxylase from Haloarcula marismortui (strain ATCC 43049 / DSM 3752 / JCM 8966 / VKM B-1809) (Halobacterium marismortui).